Reading from the N-terminus, the 158-residue chain is Fucolectin (158 aa).

An F5/8 type C-like region spans residues 16-148 (KATQSAQLRG…TSESLHLCEV (133 aa)). Asn35, Asp38, Asn40, and Ser49 together coordinate Ca(2+). 3 disulfide bridges follow: Cys50/Cys146, Cys82/Cys83, and Cys108/Cys124. Alpha-L-fucose is bound by residues His52 and Arg79. Positions 79-81 (RGD) match the Cell attachment site motif. Arg86 provides a ligand contact to alpha-L-fucose. Ca(2+) is bound by residues Cys146 and Glu147.

Belongs to the fucolectin family. In terms of assembly, homotrimer.

Its subcellular location is the secreted. Acts as a defensive agent. Recognizes blood group fucosylated oligosaccharides including A, B, H and Lewis B-type antigens. Does not recognize Lewis A antigen and has low affinity for monovalent haptens. The sequence is that of Fucolectin from Anguilla anguilla (European freshwater eel).